We begin with the raw amino-acid sequence, 84 residues long: Small ribosomal subunit protein bS20 (84 aa).

Residues 1–25 (MPVIKSAMKRVRTSEKAAARNRSQM) are disordered.

It belongs to the bacterial ribosomal protein bS20 family.

Binds directly to 16S ribosomal RNA. This Pediococcus pentosaceus (strain ATCC 25745 / CCUG 21536 / LMG 10740 / 183-1w) protein is Small ribosomal subunit protein bS20.